The chain runs to 455 residues: DNA N(6)-methyladenine demethylase ALKBH1C (455 aa).

2 disordered regions span residues 1–114 and 173–194; these read MNHS…AGDN and SSVE…SNES. In terms of domain architecture, Fe2OG dioxygenase spans 345-455; that stretch reads LPDICIVNFY…GRLNLTFRQY (111 aa). 352–354 contacts 2-oxoglutarate; the sequence is NFY. Fe cation contacts are provided by H363, D365, and H423. 2-oxoglutarate is bound at residue 447–453; that stretch reads RLNLTFR.

This sequence belongs to the alkB family. It depends on Fe(2+) as a cofactor. Expressed at low levels in roots and seedlings, but barely in cauline leaves, rosette leaves, stems, siliques and flowers.

It is found in the nucleus. The protein resides in the cytoplasm. The enzyme catalyses an N(6)-methyl-2'-deoxyadenosine in DNA + 2-oxoglutarate + O2 = a 2'-deoxyadenosine in DNA + formaldehyde + succinate + CO2. Functionally, dioxygenase that catalyzes DNA N(6)-methyladenine (6 mA) demethylation with a low efficiency. This Arabidopsis thaliana (Mouse-ear cress) protein is DNA N(6)-methyladenine demethylase ALKBH1C.